Reading from the N-terminus, the 593-residue chain is Solute carrier family 13 member 2 (593 aa).

4 consecutive transmembrane segments (helical) span residues 11-31 (YRMY…PILV), 53-73 (ALPL…MGIM), 86-106 (TNVL…WNLH), and 121-141 (PALL…WISN). Positions 164 to 184 (SNVEEGSDNPTFELQEPSPQK) are enriched in polar residues. Residues 164–204 (SNVEEGSDNPTFELQEPSPQKETSKVDEKDNGQAQPLPAVP) form a disordered region. The span at 185-194 (ETSKVDEKDN) shows a compositional bias: basic and acidic residues. 8 consecutive transmembrane segments (helical) span residues 221–241 (GMSL…LTGT), 270–290 (FAFP…QILF), 327–347 (PMSF…LLWF), 369–389 (VMVS…MVPS), 451–471 (LMPL…LLVA), 485–505 (LLLP…LYVM), 514–534 (LAFM…FGGL), and 543–563 (GIML…SWGV).

This sequence belongs to the SLC13A/DASS transporter (TC 2.A.47) family. NADC subfamily. As to expression, abundant in kidney and small intestine.

The protein localises to the apical cell membrane. It catalyses the reaction succinate(out) + 3 Na(+)(out) = succinate(in) + 3 Na(+)(in). The catalysed reaction is fumarate(out) + 3 Na(+)(out) = fumarate(in) + 3 Na(+)(in). It carries out the reaction 2-oxoglutarate(out) + 3 Na(+)(out) = 2-oxoglutarate(in) + 3 Na(+)(in). Li(+) decreases succinate transport in the presence of Na(+), by competing at one of the three cation binding sites. Its function is as follows. Low-affinity sodium-dicarboxylate cotransporter, that mediates the entry of citric acid cycle intermediates, such as succinate, citrate, fumarate and alpha-ketoglutarate (2-oxoglutarate) into the small intestine and renal proximal tubule. Transports the dicarboxylate into the cell with a probable stoichiometry of 3 Na(+) for 1 divalent dicarboxylate, rendering the process electrogenic. Citrate is transported in protonated form as a divalent anion, rather than the trivalent form which is normally found in blood. Has a critical role in renal dicarboxylate transport. The chain is Solute carrier family 13 member 2 (SLC13A2) from Oryctolagus cuniculus (Rabbit).